The chain runs to 554 residues: Asparagine--tRNA ligase, cytoplasmic (554 aa).

It belongs to the class-II aminoacyl-tRNA synthetase family.

The protein resides in the cytoplasm. It localises to the cytosol. It carries out the reaction tRNA(Asn) + L-asparagine + ATP = L-asparaginyl-tRNA(Asn) + AMP + diphosphate + H(+). Functionally, catalyzes the attachment of asparagine to tRNA(Asn) in a two-step reaction: asparagine is first activated by ATP to form Asn-AMP and then transferred to the acceptor end of tRNA(Asn). The chain is Asparagine--tRNA ligase, cytoplasmic from Saccharomyces cerevisiae (strain ATCC 204508 / S288c) (Baker's yeast).